Consider the following 140-residue polypeptide: Nucleoside diphosphate kinase (140 aa).

Positions 11, 59, 87, 93, 104, and 114 each coordinate ATP. His117 functions as the Pros-phosphohistidine intermediate in the catalytic mechanism.

It belongs to the NDK family. As to quaternary structure, homotetramer. Mg(2+) is required as a cofactor.

It is found in the cytoplasm. The enzyme catalyses a 2'-deoxyribonucleoside 5'-diphosphate + ATP = a 2'-deoxyribonucleoside 5'-triphosphate + ADP. It carries out the reaction a ribonucleoside 5'-diphosphate + ATP = a ribonucleoside 5'-triphosphate + ADP. Functionally, major role in the synthesis of nucleoside triphosphates other than ATP. The ATP gamma phosphate is transferred to the NDP beta phosphate via a ping-pong mechanism, using a phosphorylated active-site intermediate. The polypeptide is Nucleoside diphosphate kinase (Paracoccus denitrificans (strain Pd 1222)).